A 97-amino-acid polypeptide reads, in one-letter code: Nucleoid-associated protein HPP12_0031 (97 aa).

Belongs to the YbaB/EbfC family. Homodimer.

The protein resides in the cytoplasm. It localises to the nucleoid. Its function is as follows. Binds to DNA and alters its conformation. May be involved in regulation of gene expression, nucleoid organization and DNA protection. The polypeptide is Nucleoid-associated protein HPP12_0031 (Helicobacter pylori (strain P12)).